Consider the following 77-residue polypeptide: Acyl carrier protein (77 aa).

The 76-residue stretch at 2–77 (ADTLERVTKI…DAVNYIQNQQ (76 aa)) folds into the Carrier domain. S37 is modified (O-(pantetheine 4'-phosphoryl)serine).

It belongs to the acyl carrier protein (ACP) family. Post-translationally, 4'-phosphopantetheine is transferred from CoA to a specific serine of apo-ACP by AcpS. This modification is essential for activity because fatty acids are bound in thioester linkage to the sulfhydryl of the prosthetic group.

Its subcellular location is the cytoplasm. The protein operates within lipid metabolism; fatty acid biosynthesis. Carrier of the growing fatty acid chain in fatty acid biosynthesis. This chain is Acyl carrier protein (acpA), found in Bacillus subtilis (strain 168).